Reading from the N-terminus, the 1284-residue chain is Neurexin-4 (1284 aa).

The signal sequence occupies residues 1–35 (MRPPRSNTKAAFSSLQFGLLCLLLLVNNGIKSVQA). Residues 36–1217 (DAFTDYFSDY…LRKAYNEVDS (1182 aa)) lie on the Extracellular side of the membrane. Residues 47–185 (CNQPLMERAV…ISMRVELYGC (139 aa)) form the F5/8 type C domain. An intrachain disulfide couples Cys-47 to Cys-185. Asn-195, Asn-329, Asn-340, and Asn-398 each carry an N-linked (GlcNAc...) asparagine glycan. Residues 220–369 (FKTAFANGVM…FTRVNTIYAC (150 aa)) enclose the Laminin G-like 1 domain. An intrachain disulfide couples Cys-333 to Cys-369. The region spanning 403–540 (FRTYEETGVM…CGDDVVVDAC (138 aa)) is the Laminin G-like 2 domain. Intrachain disulfides connect Cys-507/Cys-540, Cys-546/Cys-557, Cys-551/Cys-566, and Cys-568/Cys-578. Residues 542 to 579 (MIDRCNPNPCQHKGLCHQNSREFFCDCGHTGYAGAVCH) enclose the EGF-like 1 domain. Asn-668 carries N-linked (GlcNAc...) asparagine glycosylation. Residues 824 to 962 (FRTTQENSVI…RGLYGISTGC (139 aa)) form the Laminin G-like 3 domain. 4 disulfides stabilise this stretch: Cys-934–Cys-962, Cys-966–Cys-977, Cys-971–Cys-986, and Cys-988–Cys-998. One can recognise an EGF-like 2 domain in the interval 962–999 (CVGRCESNPCLNNGTCIERYDGYSCDCRWSAFKGPICA). The N-linked (GlcNAc...) asparagine glycan is linked to Asn-974. In terms of domain architecture, Laminin G-like 4 spans 1032–1183 (FTTTIPKGFL…LGTQLTEDFC (152 aa)). Residues Asn-1047 and Asn-1137 are each glycosylated (N-linked (GlcNAc...) asparagine). A disulfide bridge links Cys-1147 with Cys-1183. Residues 1218-1238 (VLLACLLVILFLLLILMFFLI) traverse the membrane as a helical segment. The Cytoplasmic portion of the chain corresponds to 1239-1284 (GRYLHRHKGDYLTHEDQGADGADDPDDAVLHSTTGHQVRKRTEIFI).

It belongs to the neurexin family. In terms of assembly, forms a complex with Nrg and Cont. Forms a complex composed of septa junction proteins Nrx-IV/Nrx, Tsf2/MTf, Cont and Nrg during late embryogenesis. The C-terminal region interacts with coracle. Interacts with Patj in cis form. Found in septate junctions of epithelial and glial cells.

The protein localises to the cell membrane. The protein resides in the cell junction. It is found in the septate junction. Seems to play a role in the formation and function of septate junctions. Septate junctions, which are the equivalent of vertebrates tight junctions, are characterized by regular arrays of transverse structures that span the intermembrane space and form a physical barrier to diffusion. Required for the blood-brain barrier formation. This chain is Neurexin-4 (Nrx-IV), found in Drosophila melanogaster (Fruit fly).